The following is a 316-amino-acid chain: tRNA dimethylallyltransferase (316 aa).

9-16 (GPTASGKS) provides a ligand contact to ATP. 11–16 (TASGKS) is a substrate binding site. Interaction with substrate tRNA stretches follow at residues 34 to 37 (DSMQ) and 158 to 162 (QRLAR).

Belongs to the IPP transferase family. Monomer. The cofactor is Mg(2+).

The catalysed reaction is adenosine(37) in tRNA + dimethylallyl diphosphate = N(6)-dimethylallyladenosine(37) in tRNA + diphosphate. Functionally, catalyzes the transfer of a dimethylallyl group onto the adenine at position 37 in tRNAs that read codons beginning with uridine, leading to the formation of N6-(dimethylallyl)adenosine (i(6)A). In Hyphomonas neptunium (strain ATCC 15444), this protein is tRNA dimethylallyltransferase.